Consider the following 437-residue polypeptide: Palmitoyltransferase PFA4 (437 aa).

Residues 1-12 (MAGLNDVPFIKG) lie on the Cytoplasmic side of the membrane. A helical membrane pass occupies residues 13–33 (LAVPSVCALIIFLGYASQFLF). Residues 34–48 (NYSTTLEPGPPTRRE) lie on the Lumenal side of the membrane. The chain crosses the membrane as a helical span at residues 49 to 69 (TIIFNGLLLVLWITYYRTVAT). Residues 70–130 (DPGRYIFKDR…RNCVSMTTFP (61 aa)) lie on the Cytoplasmic side of the membrane. Residues 87–137 (RWCNKCAAPKPPRAHHCRHCARCVPRMDHHCPWTRNCVSMTTFPHFLRFLI) enclose the DHHC domain. The active-site S-palmitoyl cysteine intermediate is Cys117. Residues 131 to 151 (HFLRFLIYTNMSLWMLGYFLW) form a helical membrane-spanning segment. The Lumenal portion of the chain corresponds to 152-173 (QRFSKIWEHRRLPAYLGPSFYG). Residues 174–194 (LICLSLISIVNFVTTVALGIM) traverse the membrane as a helical segment. The Cytoplasmic segment spans residues 195 to 437 (LINTVKSWVF…KILKKDGLDD (243 aa)). The interval 377–419 (LDQGLGWVNSDGDRLRDYGVDEEASEPEGVNDDDDDDDDDDVP) is disordered. Residues 396 to 419 (VDEEASEPEGVNDDDDDDDDDDVP) are compositionally biased toward acidic residues.

The protein belongs to the DHHC palmitoyltransferase family. PFA4 subfamily.

The protein localises to the endoplasmic reticulum membrane. The catalysed reaction is L-cysteinyl-[protein] + hexadecanoyl-CoA = S-hexadecanoyl-L-cysteinyl-[protein] + CoA. Functionally, mediates the reversible addition of palmitate to target proteins, thereby regulating their membrane association and biological function. The polypeptide is Palmitoyltransferase PFA4 (Gibberella zeae (strain ATCC MYA-4620 / CBS 123657 / FGSC 9075 / NRRL 31084 / PH-1) (Wheat head blight fungus)).